A 402-amino-acid polypeptide reads, in one-letter code: S-adenosylmethionine synthase (402 aa).

His-17 provides a ligand contact to ATP. Asp-19 provides a ligand contact to Mg(2+). Glu-45 contacts K(+). L-methionine-binding residues include Glu-58 and Gln-101. The tract at residues 101–111 is flexible loop; it reads QSSDIADGVNE. ATP contacts are provided by residues 177 to 179, 244 to 245, Asp-253, 259 to 260, Ala-276, and Lys-280; these read DAK, RF, and RK. Asp-253 lines the L-methionine pocket. Residue Lys-284 coordinates L-methionine.

The protein belongs to the AdoMet synthase family. Homotetramer; dimer of dimers. It depends on Mg(2+) as a cofactor. The cofactor is K(+).

The protein localises to the cytoplasm. The enzyme catalyses L-methionine + ATP + H2O = S-adenosyl-L-methionine + phosphate + diphosphate. Its pathway is amino-acid biosynthesis; S-adenosyl-L-methionine biosynthesis; S-adenosyl-L-methionine from L-methionine: step 1/1. Functionally, catalyzes the formation of S-adenosylmethionine (AdoMet) from methionine and ATP. The overall synthetic reaction is composed of two sequential steps, AdoMet formation and the subsequent tripolyphosphate hydrolysis which occurs prior to release of AdoMet from the enzyme. The chain is S-adenosylmethionine synthase from Lactobacillus johnsonii (strain CNCM I-12250 / La1 / NCC 533).